The primary structure comprises 234 residues: MLFSPPLQRATLIQRYKRFLADVITLDGTALTLHCPNTGAMTGCATPGDTVWYSTSENTKRKYPHTWELTETQSGVFICVNTLWANRLTKEAIQEDRLPELAGYNILKSEVKYGAERSRIDFMLQADFRPDCYIEVKSVTLAEKENGYFPDAITERGQKHLRELMGVAAAGHRAVVLFAVLHSAITRFSPARHIDIKYAQLLSEAQNKGVEVLAYKAELSATKMELNKSVPIML.

The H-T-H motif DNA-binding region spans 201–220; sequence LLSEAQNKGVEVLAYKAELS.

This sequence belongs to the SfsA family.

Functionally, binds to DNA non-specifically. Could be a regulatory factor involved in maltose metabolism. This chain is Sugar fermentation stimulation protein A, found in Salmonella arizonae (strain ATCC BAA-731 / CDC346-86 / RSK2980).